Reading from the N-terminus, the 547-residue chain is Auxin transporter-like protein 3 (547 aa).

Topologically, residues 1-74 (MASGSSGGGY…DAWFSCASNQ (74 aa)) are cytoplasmic. A helical transmembrane segment spans residues 75–92 (VAQVLLTLPYSFAQLGMA). Topologically, residues 93–94 (SG) are extracellular. The chain crosses the membrane as a helical span at residues 95 to 115 (LLFQLFYGLLGSWTAYLISIL). Topologically, residues 116 to 151 (YLEYRTRKERDKVDFRNHVIQWFEVLDGLLGRHWRN) are cytoplasmic. The helical transmembrane segment at 152 to 172 (VGLAFNCTFLLFGSVIQLIGC) threads the bilayer. Residues 173–187 (ASNIYYINDHLDKRT) lie on the Extracellular side of the membrane. Residues 188–208 (WTYIFGACCATTVFIPSFHNY) traverse the membrane as a helical segment. The Cytoplasmic portion of the chain corresponds to 209–211 (RIW). Residues 212–232 (SFLGLLMTTYTAWYIAVASLI) form a helical membrane-spanning segment. At 233–247 (HGQVEGVAHSGPTSI) the chain is on the extracellular side. The chain crosses the membrane as a helical span at residues 248–268 (VLYFTGATNILYTFGGHAVTV). The Cytoplasmic segment spans residues 269–281 (EIMHAMWRPQKFK). Residues 282–302 (AIYLLATVYVLTLTLPSASAA) form a helical membrane-spanning segment. Residues 303-329 (YWAFGDALLTHSNALALLPRTPWRDAA) are Extracellular-facing. A helical membrane pass occupies residues 330 to 350 (VVLMLIHQFITFGFACTPLYF). Residues 351 to 371 (VWEKLVGLHGCPSLCKRAAAR) lie on the Cytoplasmic side of the membrane. The helical transmembrane segment at 372–392 (LPVVLPIWFLAIIFPFFGPIN) threads the bilayer. Residue S393 is a topological domain, extracellular. Residues 394–414 (AVGSLLVSFTVYIIPSLAYMV) traverse the membrane as a helical segment. Topologically, residues 415–440 (TFRSPQSRQNAVERPPRFAGGWTGAY) are cytoplasmic. The chain crosses the membrane as a helical span at residues 441–461 (VINSFVVAWVLVVGFGFGGWA). At 462-547 (SITNFVHQVD…HHHRHHRHGL (86 aa)) the chain is on the extracellular side. A glycan (N-linked (GlcNAc...) asparagine) is linked at N509.

This sequence belongs to the amino acid/polyamine transporter 2 family. Amino acid/auxin permease (AAAP) (TC 2.A.18.1) subfamily.

The protein localises to the cell membrane. In terms of biological role, carrier protein involved in proton-driven auxin influx. May mediate the formation of auxin gradient from developing leaves (site of auxin biosynthesis) to tips. The sequence is that of Auxin transporter-like protein 3 from Oryza sativa subsp. japonica (Rice).